Here is a 490-residue protein sequence, read N- to C-terminus: Nuclear distribution protein PAC1 (490 aa).

Residues Ser65–Asn96 adopt a coiled-coil conformation. WD repeat units lie at residues Gln118 to Pro157, Ala163 to Asn204, Gly205 to Ser245, Glu251 to Met290, Gly293 to Ile327, Pro328 to His367, Gly388 to Ser427, and Gly436 to Lys487.

Belongs to the WD repeat LIS1/nudF family. As to quaternary structure, self-associates. Interacts with NDL1 and dynein.

The protein resides in the cytoplasm. It localises to the cytoskeleton. It is found in the spindle pole. Positively regulates the activity of the minus-end directed microtubule motor protein dynein. Plays a central role in positioning the mitotic spindle at the bud neck during cell division. Targets cytoplasmic dynein to microtubule plus ends, thereby promoting dynein-mediated microtubule sliding along the bud cortex and consequently the movement of the mitotic spindle to the bud neck. This is Nuclear distribution protein PAC1 from Candida tropicalis (strain ATCC MYA-3404 / T1) (Yeast).